A 217-amino-acid chain; its full sequence is Probable transaldolase (217 aa).

Lysine 83 (schiff-base intermediate with substrate) is an active-site residue.

This sequence belongs to the transaldolase family. Type 3B subfamily.

Its subcellular location is the cytoplasm. The enzyme catalyses D-sedoheptulose 7-phosphate + D-glyceraldehyde 3-phosphate = D-erythrose 4-phosphate + beta-D-fructose 6-phosphate. The protein operates within carbohydrate degradation; pentose phosphate pathway; D-glyceraldehyde 3-phosphate and beta-D-fructose 6-phosphate from D-ribose 5-phosphate and D-xylulose 5-phosphate (non-oxidative stage): step 2/3. Functionally, transaldolase is important for the balance of metabolites in the pentose-phosphate pathway. The polypeptide is Probable transaldolase (Clostridium botulinum (strain Okra / Type B1)).